A 628-amino-acid chain; its full sequence is MKGQETRGFQSEVKQLLHLMIHSLYSNKEIFLRELISNASDAADKLRFRALSQPDLYEGDGELRVRLSCDKEKRTLTFSDNGIGMRREEVIDNLGTIAKSGTKAFLESMGSDQLKDSQLIGQFGVGFYSAFIVADKVTVRTRAAGAKPDGGVFWESAGEGDYTIADITKPERGTEITLHLREGEDDFLDDWRLKSVIGKYSDHIVLPVEIETRSKSEEEGSDEEVVTWEKINKAQALWTRNKADISDDEYKEFYKHLSHDFSEPLSWSHNRVEGKQEYTSLLYIPAKAPWDMWNREHKHGLKLYVQRVFIMDDAEQFMPNYLRFVKGLIDSNDLPLNVSREILQDSRVTQNLKGALTKRALSMLEKLAKDDAQQYQSFWQEFGLVLKEGAGEDPTNGEAVAKLLRFASTHGDSPAQTVSLEEYVGRMVEGQEKIYYITADSYAAAKSSPHLELLRKKGIEVLLFSDRIDEWMMSYLTEFDGKAFQSVSKADPSLDKLADEEDEEQKEVEKALEPFVERVKTYLGERVKEVRLTHRLTDTPAVVTTDADDMTTQMAKLFAAAGQAAPEIKYIFELNPDHALVKRTANLGDDGAFGDWVELLLDQALLAERGTLDDPNQFIRRMNQLLNA.

An a; substrate-binding region spans residues 1-340; sequence MKGQETRGFQ…SNDLPLNVSR (340 aa). Residues 341–556 form a b region; it reads EILQDSRVTQ…ADDMTTQMAK (216 aa). The interval 557 to 628 is c; the sequence is LFAAAGQAAP…IRRMNQLLNA (72 aa).

The protein belongs to the heat shock protein 90 family. In terms of assembly, homodimer.

The protein localises to the cytoplasm. Its function is as follows. Molecular chaperone. Has ATPase activity. This is Chaperone protein HtpG from Sodalis glossinidius (strain morsitans).